We begin with the raw amino-acid sequence, 315 residues long: Oxalate oxidoreductase subunit delta (315 aa).

2 4Fe-4S ferredoxin-type domains span residues 252–280 and 281–310; these read QRPI…TRTE and EGPV…NVPE. [4Fe-4S] cluster contacts are provided by cysteine 261, cysteine 264, cysteine 267, cysteine 271, cysteine 290, cysteine 293, cysteine 296, and cysteine 300.

Dimer of heterotrimer of one alpha, one beta and one delta subunit. [4Fe-4S] cluster serves as cofactor.

The enzyme catalyses oxidized 2[4Fe-4S]-[ferredoxin] + oxalate = reduced 2[4Fe-4S]-[ferredoxin] + 2 CO2. Functionally, catalyzes the anaerobic oxidation of oxalate using a broad range of electron acceptors, including ferredoxin and the nickel-dependent carbon monoxide dehydrogenase. Does not require coenzyme A as cosubstrate. Enables anaerobic growth on oxalate which is used as energy source by the bacteria. The polypeptide is Oxalate oxidoreductase subunit delta (Moorella thermoacetica (strain ATCC 39073 / JCM 9320)).